The following is a 146-amino-acid chain: UPF0742 protein PB2B2.17c (146 aa).

A helical transmembrane segment spans residues 38–60 (LTVKYCLAVKLLIYLLYCWYIYS).

The protein belongs to the UPF0742 family.

Its subcellular location is the cytoplasm. It localises to the nucleus membrane. The sequence is that of UPF0742 protein PB2B2.17c from Schizosaccharomyces pombe (strain 972 / ATCC 24843) (Fission yeast).